The chain runs to 29 residues: Small toxic protein ZorO (29 aa).

The chain crosses the membrane as a helical span at residues 10 to 27 (VLIAVLELLVALLRLIDL).

The protein resides in the cell inner membrane. In terms of biological role, toxic component of a type I toxin-antitoxin (TA) system. Expression in the absence of its cognate antitoxin (small sRNA orzO) leads to cell stasis and a decrease in colony-forming units. Repression of ZorO toxicity requires base pairing between zorO mRNA and sRNA OrzO, as well as RNase III (rnc), suggesting the mRNA is degraded. Base pairing occurs between 18 bases in the 5' UTR of zorO mRNA and the 5' end of OrzO sRNA. sRNA OrzP, which differs only in 4 of these 18 bases, does not repress ZorO toxicity. Integration of the protein into the inner membrane damages membrane integrity and affects membrane potential. It leads to increased levels of hydroxyl radicals. The chain is Small toxic protein ZorO from Escherichia coli O157:H7.